A 128-amino-acid polypeptide reads, in one-letter code: Small ribosomal subunit protein bS6 (128 aa).

The segment at 105–128 is disordered; sequence AKVTEEEPVEAAPEAKVETTTEEE. Over residues 117 to 128 the composition is skewed to basic and acidic residues; that stretch reads PEAKVETTTEEE.

Belongs to the bacterial ribosomal protein bS6 family.

In terms of biological role, binds together with bS18 to 16S ribosomal RNA. This Geotalea daltonii (strain DSM 22248 / JCM 15807 / FRC-32) (Geobacter daltonii) protein is Small ribosomal subunit protein bS6.